The primary structure comprises 715 residues: Fatty acid oxidation complex subunit alpha (715 aa).

The enoyl-CoA hydratase stretch occupies residues 1 to 194 (MHEQRAKPSA…RLGLVDDAVP (194 aa)). The segment at 310–715 (HALHRIGILG…QGERFYPQGS (406 aa)) is 3-hydroxyacyl-CoA dehydrogenase.

In the N-terminal section; belongs to the enoyl-CoA hydratase/isomerase family. The protein in the central section; belongs to the 3-hydroxyacyl-CoA dehydrogenase family. Heterotetramer of two alpha chains (FadJ) and two beta chains (FadI).

It localises to the cytoplasm. It carries out the reaction a (3S)-3-hydroxyacyl-CoA = a (2E)-enoyl-CoA + H2O. It catalyses the reaction a 4-saturated-(3S)-3-hydroxyacyl-CoA = a (3E)-enoyl-CoA + H2O. The enzyme catalyses a (3S)-3-hydroxyacyl-CoA + NAD(+) = a 3-oxoacyl-CoA + NADH + H(+). The catalysed reaction is (3S)-3-hydroxybutanoyl-CoA = (3R)-3-hydroxybutanoyl-CoA. The protein operates within lipid metabolism; fatty acid beta-oxidation. Catalyzes the formation of a hydroxyacyl-CoA by addition of water on enoyl-CoA. Also exhibits 3-hydroxyacyl-CoA epimerase and 3-hydroxyacyl-CoA dehydrogenase activities. This Serratia proteamaculans (strain 568) protein is Fatty acid oxidation complex subunit alpha.